The sequence spans 229 residues: Probable transmembrane reductase CYB561D1 (229 aa).

The Cytoplasmic segment spans residues 1–24 (MQPLEVGLVPAPAGEPRLTRWLRR). The region spanning 22 to 224 (LRRGSGILAH…HQISRSYLPR (203 aa)) is the Cytochrome b561 domain. The chain crosses the membrane as a helical span at residues 25–45 (GSGILAHLVALGFTIFLTALS). At 46 to 53 (RPGTSLFS) the chain is on the lumenal side. Residues 54–74 (WHPVFMALAFCLCMAEAILLF) traverse the membrane as a helical segment. Position 55 (His-55) interacts with heme b. At 75-91 (SPEHSLFFFCSRKARIR) the chain is on the cytoplasmic side. Residues 92-112 (LHWAGQTLAILCAALGLGFII) form a helical membrane-spanning segment. The heme b site is built by His-93 and His-127. The Lumenal portion of the chain corresponds to 113–128 (SSRTRSELPHLVSWHS). Residues 129–149 (WVGALTLLATAVQALCGLCLL) traverse the membrane as a helical segment. Over 150 to 169 (CPRAARVSRVARLKLYHLTC) the chain is Cytoplasmic. A heme b-binding site is contributed by His-166. The chain crosses the membrane as a helical span at residues 170–190 (GLVVYLMATVTVLLGMYSVWF). The Lumenal portion of the chain corresponds to 191–193 (QAQ). The chain crosses the membrane as a helical span at residues 194–214 (IKGAAWYLCLALPVYPALVIM). The Cytoplasmic segment spans residues 215-229 (HQISRSYLPRKKMEM).

Heme b is required as a cofactor.

It is found in the membrane. It carries out the reaction monodehydro-L-ascorbate radical(out) + L-ascorbate(in) = monodehydro-L-ascorbate radical(in) + L-ascorbate(out). The enzyme catalyses Fe(3+)(out) + L-ascorbate(in) = monodehydro-L-ascorbate radical(in) + Fe(2+)(out) + H(+). Functionally, probable transmembrane reductase that may use ascorbate as an electron donor and transfer electrons across membranes to reduce monodehydro-L-ascorbate radical and iron cations Fe(3+) in another cellular compartment. The sequence is that of Probable transmembrane reductase CYB561D1 from Homo sapiens (Human).